Consider the following 206-residue polypeptide: N-(5'-phosphoribosyl)anthranilate isomerase (206 aa).

The protein belongs to the TrpF family.

The enzyme catalyses N-(5-phospho-beta-D-ribosyl)anthranilate = 1-(2-carboxyphenylamino)-1-deoxy-D-ribulose 5-phosphate. The protein operates within amino-acid biosynthesis; L-tryptophan biosynthesis; L-tryptophan from chorismate: step 3/5. This is N-(5'-phosphoribosyl)anthranilate isomerase from Pseudomonas savastanoi pv. phaseolicola (strain 1448A / Race 6) (Pseudomonas syringae pv. phaseolicola (strain 1448A / Race 6)).